Reading from the N-terminus, the 242-residue chain is Probable transcriptional regulatory protein mhp472 (242 aa).

Belongs to the TACO1 family.

It localises to the cytoplasm. In Mesomycoplasma hyopneumoniae (strain 232) (Mycoplasma hyopneumoniae), this protein is Probable transcriptional regulatory protein mhp472.